We begin with the raw amino-acid sequence, 112 residues long: Tyrosine-protein phosphatase 7 (112 aa).

In terms of domain architecture, Tyrosine-protein phosphatase spans 1–112 (NNVTIIVMIT…SSPESGPIVV (112 aa)). A substrate-binding site is contributed by Asp82.

Belongs to the protein-tyrosine phosphatase family.

It carries out the reaction O-phospho-L-tyrosyl-[protein] + H2O = L-tyrosyl-[protein] + phosphate. The protein is Tyrosine-protein phosphatase 7 (STY-7) of Styela plicata (Wrinkled sea squirt).